Consider the following 544-residue polypeptide: MVHPQLKRSIESLSFSGYKLTRRNLYNAPALKVMGRSVNNSSSNNNDQQQYNLESAKQNTQIVVIGAGLAGLSAAQHLLRHGFRSTIVLEATDRYGGRVNSKRFGDTYCELGAKWVNMNIDGAHNTIYELLRNAEGLRKQLKQRECANYVHTQGREVPPNMVELIDMQFRQLCRGFKVSEKVKSGGDLHVLDNVMAYFKTESEKLVGHSYPDPEKRALAREIFQSLFKEFSSILGCCLEYVNIEHITSCPVQQELRPLYVPTGLDNVLDTLTQHISKEQLQTGKPVGSIQWQTLSDFGAPTSPLPQERKCVACLDGTLYSADHIICTLPLGVLKNFSAILFKPALPLEKLQAIRNLGYGNPVKIYLAYKRPISRWLKSNLRPLGAQLGKDEPAITVNGRQERLWTQQVVEISQLPSSQHVLEIRVGGGYYDEIEKLPDVTLLEQITALLRQCLRNRLVPYPQALLRSNWSTSACYLGGRPYFSTTSSARDVQRLAEPLGDIAPTLLFAGDATALKGFGTIDGARTSGIREAQRIIDYYYLKQYM.

It is found in the cytoplasm. Has a non-vital function. In Drosophila lebanonensis (Fruit fly), this protein is Protein anon-37Cs (anon-37Cs).